The chain runs to 218 residues: uncharacterized protein (218 aa).

The ACT domain occupies 4–83 (GISIEAENKV…IHSSLKKIYG (80 aa)).

This is an uncharacterized protein from Methanocaldococcus jannaschii (strain ATCC 43067 / DSM 2661 / JAL-1 / JCM 10045 / NBRC 100440) (Methanococcus jannaschii).